Reading from the N-terminus, the 187-residue chain is Peptidyl-tRNA hydrolase (187 aa).

A tRNA-binding site is contributed by tyrosine 14. Residue histidine 19 is the Proton acceptor of the active site. TRNA is bound by residues tyrosine 64 and asparagine 66.

The protein belongs to the PTH family. Monomer.

It localises to the cytoplasm. The enzyme catalyses an N-acyl-L-alpha-aminoacyl-tRNA + H2O = an N-acyl-L-amino acid + a tRNA + H(+). Hydrolyzes ribosome-free peptidyl-tRNAs (with 1 or more amino acids incorporated), which drop off the ribosome during protein synthesis, or as a result of ribosome stalling. In terms of biological role, catalyzes the release of premature peptidyl moieties from peptidyl-tRNA molecules trapped in stalled 50S ribosomal subunits, and thus maintains levels of free tRNAs and 50S ribosomes. The chain is Peptidyl-tRNA hydrolase from Carboxydothermus hydrogenoformans (strain ATCC BAA-161 / DSM 6008 / Z-2901).